The primary structure comprises 405 residues: Probable tRNA sulfurtransferase (405 aa).

The 106-residue stretch at 60 to 165 (ETIDQRLKLV…QDAIYISNQL (106 aa)) folds into the THUMP domain. ATP contacts are provided by residues 183-184 (ML), 208-209 (HF), Arg265, Gly287, and Gln296.

This sequence belongs to the ThiI family.

The protein resides in the cytoplasm. It carries out the reaction [ThiI sulfur-carrier protein]-S-sulfanyl-L-cysteine + a uridine in tRNA + 2 reduced [2Fe-2S]-[ferredoxin] + ATP + H(+) = [ThiI sulfur-carrier protein]-L-cysteine + a 4-thiouridine in tRNA + 2 oxidized [2Fe-2S]-[ferredoxin] + AMP + diphosphate. It catalyses the reaction [ThiS sulfur-carrier protein]-C-terminal Gly-Gly-AMP + S-sulfanyl-L-cysteinyl-[cysteine desulfurase] + AH2 = [ThiS sulfur-carrier protein]-C-terminal-Gly-aminoethanethioate + L-cysteinyl-[cysteine desulfurase] + A + AMP + 2 H(+). It functions in the pathway cofactor biosynthesis; thiamine diphosphate biosynthesis. In terms of biological role, catalyzes the ATP-dependent transfer of a sulfur to tRNA to produce 4-thiouridine in position 8 of tRNAs, which functions as a near-UV photosensor. Also catalyzes the transfer of sulfur to the sulfur carrier protein ThiS, forming ThiS-thiocarboxylate. This is a step in the synthesis of thiazole, in the thiamine biosynthesis pathway. The sulfur is donated as persulfide by IscS. This is Probable tRNA sulfurtransferase from Lactobacillus johnsonii (strain CNCM I-12250 / La1 / NCC 533).